A 305-amino-acid chain; its full sequence is ATP synthase gamma chain (305 aa).

This sequence belongs to the ATPase gamma chain family. F-type ATPases have 2 components, CF(1) - the catalytic core - and CF(0) - the membrane proton channel. CF(1) has five subunits: alpha(3), beta(3), gamma(1), delta(1), epsilon(1). CF(0) has three main subunits: a, b and c.

The protein resides in the cell membrane. Produces ATP from ADP in the presence of a proton gradient across the membrane. The gamma chain is believed to be important in regulating ATPase activity and the flow of protons through the CF(0) complex. The polypeptide is ATP synthase gamma chain (Mycobacterium tuberculosis (strain ATCC 25177 / H37Ra)).